A 371-amino-acid polypeptide reads, in one-letter code: dTDP-4-amino-4,6-dideoxy-D-glucose transaminase (371 aa).

An N6-(pyridoxal phosphate)lysine modification is found at Lys-186.

The protein belongs to the DegT/DnrJ/EryC1 family. Pyridoxal 5'-phosphate is required as a cofactor.

It catalyses the reaction dTDP-4-amino-4,6-dideoxy-D-glucose + 2-oxoglutarate = dTDP-4-dehydro-6-deoxy-alpha-D-glucose + L-glutamate. It functions in the pathway bacterial outer membrane biogenesis; lipopolysaccharide biosynthesis. Functionally, catalyzes the conversion of dTDP-4-dehydro-6-deoxy-D-glucose (dTDP-D-Glc4O) to dTDP-4-amino-4,6-dideoxy-D-glucose (dTDP-D-Qui4N). The polypeptide is dTDP-4-amino-4,6-dideoxy-D-glucose transaminase (vioA) (Escherichia coli).